A 372-amino-acid polypeptide reads, in one-letter code: Gibberellin 20 oxidase 1 (372 aa).

Residues 209-309 (RNDSIMRLNY…RRSLAFFLCP (101 aa)) form the Fe2OG dioxygenase domain. Positions 234, 236, and 290 each coordinate Fe cation. Residue Arg-300 is part of the active site.

Belongs to the iron/ascorbate-dependent oxidoreductase family. GA20OX subfamily. The cofactor is Fe(2+). It depends on L-ascorbate as a cofactor. Preferentially expressed in reproductive organs. Expressed in the epithelium of embryos and the tapetum of anthers. Expressed at low levels in the shoot apical meristem.

The catalysed reaction is gibberellin A12 + 2 2-oxoglutarate + 3 O2 + H(+) = gibberellin A9 + 2 succinate + 3 CO2 + 2 H2O. It carries out the reaction gibberellin A53 + 2 2-oxoglutarate + 3 O2 + H(+) = gibberellin A20 + 2 succinate + 3 CO2 + 2 H2O. Key oxidase enzyme in the biosynthesis of gibberellin. Catalyzes the conversion of GA12 and GA53 to GA9 and GA20 respectively, via a three-step oxidation at C-20 of the GA skeleton. In Oryza sativa subsp. japonica (Rice), this protein is Gibberellin 20 oxidase 1.